Here is a 173-residue protein sequence, read N- to C-terminus: Shikimate kinase 1 (173 aa).

ATP is bound at residue 14-19; the sequence is GAGKST. Ser18 provides a ligand contact to Mg(2+). Positions 36, 60, and 82 each coordinate substrate. Position 120 (Arg120) interacts with ATP. Residue Arg140 coordinates substrate. Gln157 is an ATP binding site.

Belongs to the shikimate kinase family. In terms of assembly, monomer. Mg(2+) serves as cofactor.

The protein localises to the cytoplasm. The catalysed reaction is shikimate + ATP = 3-phosphoshikimate + ADP + H(+). The protein operates within metabolic intermediate biosynthesis; chorismate biosynthesis; chorismate from D-erythrose 4-phosphate and phosphoenolpyruvate: step 5/7. Its function is as follows. Catalyzes the specific phosphorylation of the 3-hydroxyl group of shikimic acid using ATP as a cosubstrate. This Enterobacter sp. (strain 638) protein is Shikimate kinase 1.